The following is a 188-amino-acid chain: Accessory gene regulator protein B (188 aa).

Helical transmembrane passes span L49–L69, I104–A126, I143–Y163, and F166–E186.

Belongs to the AgrB family.

Its subcellular location is the cell membrane. Essential for the production of a quorum sensing system signal molecule, the autoinducing peptide (AIP). This quorum sensing system is responsible for the regulation of the expression of virulence factor genes. Involved in the proteolytic processing of AgrD, the precursor of AIP. This is Accessory gene regulator protein B from Staphylococcus intermedius.